The chain runs to 664 residues: Bifunctional 3-dehydroquinate synthase/phosphatase (664 aa).

The 3-dehydroquinate synthase stretch occupies residues 1-352 (MKKIFDDIYV…KIIDKYKNNF (352 aa)). Residues 61 to 66 (DGEEYK), 95 to 99 (GVICD), 119 to 120 (TS), lysine 132, lysine 141, and 159 to 162 (FLKT) contribute to the NAD(+) site. Zn(2+) contacts are provided by glutamate 174, histidine 238, and histidine 255. The GPPA/PPX stretch occupies residues 353 to 664 (LRASIDIGTN…GAILEGVENK (312 aa)).

In the N-terminal section; belongs to the sugar phosphate cyclases superfamily. Dehydroquinate synthase family. It in the C-terminal section; belongs to the GppA/Ppx family. Monomer. It depends on NAD(+) as a cofactor. Requires Co(2+) as cofactor. Zn(2+) serves as cofactor.

The protein resides in the cytoplasm. It catalyses the reaction 7-phospho-2-dehydro-3-deoxy-D-arabino-heptonate = 3-dehydroquinate + phosphate. It functions in the pathway metabolic intermediate biosynthesis; chorismate biosynthesis; chorismate from D-erythrose 4-phosphate and phosphoenolpyruvate: step 2/7. This is Bifunctional 3-dehydroquinate synthase/phosphatase (aroB) from Fusobacterium nucleatum subsp. nucleatum (strain ATCC 25586 / DSM 15643 / BCRC 10681 / CIP 101130 / JCM 8532 / KCTC 2640 / LMG 13131 / VPI 4355).